The chain runs to 562 residues: Potassium-transporting ATPase potassium-binding subunit (562 aa).

The next 12 membrane-spanning stretches (helical) occupy residues 6–26 (FLLI…LGSF), 62–82 (YALA…ALLM), 132–152 (GLAV…FALI), 170–190 (VFRI…LFFV), 253–273 (FVQM…FGQV), 283–303 (LIWA…YAEL), 327–347 (FGIL…CGAV), 356–376 (ALGG…FGGV), 379–399 (GLYG…LMIG), 416–436 (MTAL…ALAI), 483–503 (LLLA…VLAI), and 526–546 (LFIG…FVPA).

It belongs to the KdpA family. In terms of assembly, the system is composed of three essential subunits: KdpA, KdpB and KdpC.

Its subcellular location is the cell inner membrane. Its function is as follows. Part of the high-affinity ATP-driven potassium transport (or Kdp) system, which catalyzes the hydrolysis of ATP coupled with the electrogenic transport of potassium into the cytoplasm. This subunit binds the periplasmic potassium ions and delivers the ions to the membrane domain of KdpB through an intramembrane tunnel. This is Potassium-transporting ATPase potassium-binding subunit from Serratia proteamaculans (strain 568).